The sequence spans 128 residues: Photosystem II reaction center Psb28 protein (128 aa).

Residues 109-128 (SGLGYSQDSGEAPASDSSNG) are disordered. Polar residues predominate over residues 111-128 (LGYSQDSGEAPASDSSNG).

Belongs to the Psb28 family. Part of the photosystem II complex.

It is found in the cellular thylakoid membrane. This chain is Photosystem II reaction center Psb28 protein, found in Synechococcus sp. (strain CC9311).